The chain runs to 72 residues: Large ribosomal subunit protein bL31 (72 aa).

The protein belongs to the bacterial ribosomal protein bL31 family. Type A subfamily. As to quaternary structure, part of the 50S ribosomal subunit.

Functionally, binds the 23S rRNA. In Deinococcus deserti (strain DSM 17065 / CIP 109153 / LMG 22923 / VCD115), this protein is Large ribosomal subunit protein bL31.